Reading from the N-terminus, the 1137-residue chain is Bone sialoprotein-binding protein (1137 aa).

A signal peptide spans M1 to A52. The ligand binding A region stretch occupies residues A53 to K601. 2 disordered regions span residues E54 to T249 and L675 to K697. Over residues A61 to V75 the composition is skewed to basic and acidic residues. The span at E77–T89 shows a compositional bias: polar residues. Residues I92–E106 show a composition bias toward basic and acidic residues. Positions T109–T126 are enriched in low complexity. Basic and acidic residues predominate over residues N130–T145. The segment covering P158 to T207 has biased composition (polar residues). The segment covering S216–T241 has biased composition (basic and acidic residues). CNA-B domains lie at L602–P714, K715–P824, and K825–T935. The segment at T896–N1112 is disordered. Acidic residues-rich tracts occupy residues T903–E913 and Y930–S1076. An LPXTG sorting signal motif is present at residues L1100–G1104. At T1103 the chain carries Pentaglycyl murein peptidoglycan amidated threonine. The propeptide at G1104 to K1137 is removed by sortase.

Belongs to the serine-aspartate repeat-containing protein (SDr) family.

Its subcellular location is the secreted. The protein localises to the cell wall. In terms of biological role, specifically interacts with bone sialoprotein (BSP), a glycoprotein of bone and dentin extracellular matrix. Could contribute to staphylococcal osteomyelitis and arthritis. This Staphylococcus aureus (strain MRSA252) protein is Bone sialoprotein-binding protein (bbp).